Here is a 227-residue protein sequence, read N- to C-terminus: DNA repair protein RecO (227 aa).

The protein belongs to the RecO family.

Its function is as follows. Involved in DNA repair and RecF pathway recombination. This chain is DNA repair protein RecO, found in Pseudomonas syringae pv. syringae (strain B728a).